The sequence spans 230 residues: Ion-translocating oxidoreductase complex subunit E (230 aa).

Transmembrane regions (helical) follow at residues 18-38, 39-59, 63-83, 86-106, 125-145, and 182-202; these read ALVQLLGLCPLLAVTSTATNA, LGLGLATTLVLTLTNLTVSAL, TPAEIRIPIYVMIIASVVSAV, LINAYAFGLYQSLGIFIPLIV, WLSALDGFSIGMGATGAMFVL, and PFLLARLPPGAFIGLGLMLAV.

This sequence belongs to the NqrDE/RnfAE family. In terms of assembly, the complex is composed of six subunits: RsxA, RsxB, RsxC, RsxD, RsxE and RsxG.

Its subcellular location is the cell inner membrane. Part of a membrane-bound complex that couples electron transfer with translocation of ions across the membrane. Required to maintain the reduced state of SoxR. The sequence is that of Ion-translocating oxidoreductase complex subunit E from Salmonella dublin (strain CT_02021853).